Consider the following 818-residue polypeptide: Phenylalanine--tRNA ligase beta subunit (818 aa).

A tRNA-binding domain is found at 39–148 (AAELQKFEVA…EDAVVGENFT (110 aa)). Positions 423 to 498 (SQKKPLDFSA…RIYGYDKIES (76 aa)) constitute a B5 domain. Positions 476, 482, 485, and 486 each coordinate Mg(2+). The FDX-ACB domain occupies 724–817 (SDFQANFRDY…ISQKFQGTLR (94 aa)).

The protein belongs to the phenylalanyl-tRNA synthetase beta subunit family. Type 1 subfamily. As to quaternary structure, tetramer of two alpha and two beta subunits. Mg(2+) serves as cofactor.

The protein resides in the cytoplasm. The catalysed reaction is tRNA(Phe) + L-phenylalanine + ATP = L-phenylalanyl-tRNA(Phe) + AMP + diphosphate + H(+). This Rickettsia conorii (strain ATCC VR-613 / Malish 7) protein is Phenylalanine--tRNA ligase beta subunit.